A 338-amino-acid polypeptide reads, in one-letter code: uncharacterized protein (338 aa).

A signal peptide spans 1 to 29 (MIKQLYKNITICTLALSTTFTVLPATSYA).

It belongs to the aerolysin family.

This is an uncharacterized protein from Staphylococcus aureus (strain MSSA476).